A 168-amino-acid chain; its full sequence is Pleiotrophin (168 aa).

A signal peptide spans 1-32 (MSSQQYQQQRRKFAAAFLALIFILAAVDTAEA). 5 cysteine pairs are disulfide-bonded: Cys47–Cys76, Cys55–Cys85, Cys62–Cys89, Cys99–Cys131, and Cys109–Cys141. Chondroitin sulfate binding regions lie at residues 92–99 (KKQFGAEC) and 123–131 (KRALHNADC). The tract at residues 139-168 (KPCGKLTKPKPQAESKKKKKEGKKQEKMLD) is disordered. Residues 147–168 (PKPQAESKKKKKEGKKQEKMLD) form a chondroitin sulfate A binding region.

It belongs to the pleiotrophin family. In terms of assembly, interacts with ALK and NEK6. Interacts with PTPRZ1 (via chondroitin sulfate groups); promotes formation of homooligomers; oligomerization impairs tyrosine phosphatase activity. Forms a complex with PTPRZ1 and CTNNB1; this complex inactivates PTPRZ1 protein tyrosine phosphatase activity through PTN interaction and stimulates tyrosine phosphorylation of CTNNB1. Interacts with ITGB3 and ITGA5. Forms a complex with PTPRZ1 and integrin alpha-V/beta-3 (ITGAV:ITGB3) that stimulates endothelial cell migration through ITGB3 'Tyr-773' phosphorylation. Interacts with SDC3 (via heparan sulfate chains); this interaction mediates the neurite outgrowth-promoting signal from PTN to the cytoskeleton of growing neurites; this interaction mediates osteoblast recruitment. Interacts with GPC2 (via heparan sulfate); this interaction promotes neurite outgrowth through binding of PTN with chondroitin sulfate of proteoglycans, thereby releasing PTPRS of chondroitin sulfate proteoglycans (CSPGs) and leading to binding with heparan sulfate of GPC2. Phosphorylated by NEK6. Osteoblast and brain. Expressed in the follicular epithelium and granulosa cells of the ovary. Strongly expressed in the uterus of newborn mice, and the degree of expression decreased in one-week-old mice, although the expression continues even in the uteri of adult mice. Expression gradually increases from proestrus to estrus, then decreases sharply, and thereafter gradually increased again. strongly expressed in the cochlea of WT mice 1 week after birth, and then the expression decreased and was undetectable by week 8 after birth. Expressed around the cell soma of osteocytes and apparently captured in the unmineralized interstitial matrix surrounding the cells. Furthermore distributed throughout the intraosseous canalicular porosity, being localized in the unmineralized matrix around the cell processes. Strongly expressed in the innermost layer of the periosteum.

It localises to the secreted. Functionally, secreted growth factor that mediates its signal through cell-surface proteoglycan and non-proteoglycan receptors. Binds cell-surface proteoglycan receptor via their chondroitin sulfate (CS) groups. Thereby regulates many processes like cell proliferation, cell survival, cell growth, cell differentiation and cell migration in several tissues namely neuron and bone. Also plays a role in synaptic plasticity and learning-related behavior by inhibiting long-term synaptic potentiation. Binds PTPRZ1, leading to neutralization of the negative charges of the CS chains of PTPRZ1, inducing PTPRZ1 clustering, thereby causing the dimerization and inactivation of its phosphatase activity leading to increased tyrosine phosphorylation of each of the PTPRZ1 substrates like ALK or AFAP1L2 in order to activate the PI3K-AKT pathway. Through PTPRZ1 binding controls oligodendrocyte precursor cell differentiation by enhancing the phosphorylation of AFAP1L2 in order to activate the PI3K-AKT pathway. Forms a complex with PTPRZ1 and integrin alpha-V/beta-3 (ITGAV:ITGB3) that stimulates endothelial cell migration through SRC dephosphorylation and activation that consequently leads to ITGB3 'Tyr-773' phosphorylation. In adult hippocampus promotes dendritic arborization, spine development, and functional integration and connectivity of newborn granule neurons through ALK by activating AKT signaling pathway. Binds GPC2 and chondroitin sulfate proteoglycans (CSPGs) at the neuron surface, leading to abrogation of binding between PTPRS and CSPGs and neurite outgrowth promotion. Binds SDC3 and mediates bone formation by recruiting and attaching osteoblasts/osteoblast precursors to the sites for new bone deposition. Binds ALK and promotes cell survival and cell proliferation through MAPK pathway activation. Inhibits proliferation and enhances differentiation of neural stem cells by inhibiting FGF2-induced fibroblast growth factor receptor signaling pathway. Mediates regulatory mechanisms in normal hemostasis and in hematopoietic regeneration and in maintaining the balance of myeloid and lymphoid regeneration. In addition may play a role in the female reproductive system, auditory response and the progesterone-induced decidualization pathway. This chain is Pleiotrophin, found in Mus musculus (Mouse).